The sequence spans 321 residues: Serine protease 52 (321 aa).

An N-terminal signal peptide occupies residues Met1 to Ala27. The region spanning Ile56 to Ala287 is the Peptidase S1 domain. Cys81 and Cys97 are disulfide-bonded. Residues His96 and Asp142 each act as charge relay system in the active site. N-linked (GlcNAc...) asparagine glycosylation is present at Asn153. Cystine bridges form between Cys175-Cys242, Cys208-Cys221, and Cys232-Cys263. Ser236 serves as the catalytic Charge relay system. Residues Ala300 to Leu320 traverse the membrane as a helical segment.

It belongs to the peptidase S1 family.

It localises to the membrane. In terms of biological role, probable serine protease. This Mus musculus (Mouse) protein is Serine protease 52 (Prss52).